A 418-amino-acid polypeptide reads, in one-letter code: CinA-like protein (418 aa).

The protein belongs to the CinA family.

This chain is CinA-like protein, found in Cytophaga hutchinsonii (strain ATCC 33406 / DSM 1761 / CIP 103989 / NBRC 15051 / NCIMB 9469 / D465).